Consider the following 141-residue polypeptide: Nucleoside diphosphate kinase (141 aa).

6 residues coordinate ATP: lysine 11, phenylalanine 59, arginine 87, threonine 93, arginine 104, and asparagine 114. The active-site Pros-phosphohistidine intermediate is histidine 117.

This sequence belongs to the NDK family. In terms of assembly, homotetramer. The cofactor is Mg(2+).

Its subcellular location is the cytoplasm. The enzyme catalyses a 2'-deoxyribonucleoside 5'-diphosphate + ATP = a 2'-deoxyribonucleoside 5'-triphosphate + ADP. It catalyses the reaction a ribonucleoside 5'-diphosphate + ATP = a ribonucleoside 5'-triphosphate + ADP. Major role in the synthesis of nucleoside triphosphates other than ATP. The ATP gamma phosphate is transferred to the NDP beta phosphate via a ping-pong mechanism, using a phosphorylated active-site intermediate. This is Nucleoside diphosphate kinase from Vibrio parahaemolyticus serotype O3:K6 (strain RIMD 2210633).